Reading from the N-terminus, the 69-residue chain is Cold shock-like protein CspE (69 aa).

A CSD domain is found at glycine 6–valine 66.

It localises to the cytoplasm. This Buchnera aphidicola subsp. Acyrthosiphon pisum (strain APS) (Acyrthosiphon pisum symbiotic bacterium) protein is Cold shock-like protein CspE (cspE).